Reading from the N-terminus, the 75-residue chain is Small ribosomal subunit protein bS18 (75 aa).

The protein belongs to the bacterial ribosomal protein bS18 family. In terms of assembly, part of the 30S ribosomal subunit. Forms a tight heterodimer with protein bS6.

Binds as a heterodimer with protein bS6 to the central domain of the 16S rRNA, where it helps stabilize the platform of the 30S subunit. This chain is Small ribosomal subunit protein bS18, found in Cereibacter sphaeroides (strain KD131 / KCTC 12085) (Rhodobacter sphaeroides).